A 105-amino-acid chain; its full sequence is Small ribosomal subunit protein uS10 (105 aa).

Belongs to the universal ribosomal protein uS10 family. As to quaternary structure, part of the 30S ribosomal subunit.

In terms of biological role, involved in the binding of tRNA to the ribosomes. This chain is Small ribosomal subunit protein uS10, found in Rickettsia typhi (strain ATCC VR-144 / Wilmington).